A 95-amino-acid polypeptide reads, in one-letter code: Large ribosomal subunit protein bL27 (95 aa).

The propeptide occupies 1 to 9; sequence MLKMNLQFF.

Belongs to the bacterial ribosomal protein bL27 family. In terms of processing, the N-terminus is cleaved by ribosomal processing cysteine protease Prp.

This Lachnoclostridium phytofermentans (strain ATCC 700394 / DSM 18823 / ISDg) (Clostridium phytofermentans) protein is Large ribosomal subunit protein bL27.